Consider the following 539-residue polypeptide: Protein ENTREP2 (539 aa).

4 helical membrane passes run 31–51, 65–85, 89–109, and 176–196; these read IVLA…AVSF, SCPF…VVSW, LSLV…LNLA, and LLFS…LATA. Positions 301 to 481 are disordered; it reads VVGQPPASQV…TSKERPRSLV (181 aa). Positions 306–331 are enriched in polar residues; sequence PASQVTSIGQQVAESSSGDPNTSAGF. Residues 347 to 365 are compositionally biased toward low complexity; the sequence is GTATPGSSPSPDGPVGAPA. Over residues 395-408 the composition is skewed to polar residues; it reads SRSTSDPTLCTSSM.

It belongs to the ENTREP family.

It is found in the membrane. The sequence is that of Protein ENTREP2 from Homo sapiens (Human).